A 109-amino-acid chain; its full sequence is Putative pterin-4-alpha-carbinolamine dehydratase (109 aa).

It belongs to the pterin-4-alpha-carbinolamine dehydratase family.

It carries out the reaction (4aS,6R)-4a-hydroxy-L-erythro-5,6,7,8-tetrahydrobiopterin = (6R)-L-erythro-6,7-dihydrobiopterin + H2O. This is Putative pterin-4-alpha-carbinolamine dehydratase from Rickettsia canadensis (strain McKiel).